Reading from the N-terminus, the 278-residue chain is Indole-3-glycerol phosphate synthase (278 aa).

Belongs to the TrpC family.

It catalyses the reaction 1-(2-carboxyphenylamino)-1-deoxy-D-ribulose 5-phosphate + H(+) = (1S,2R)-1-C-(indol-3-yl)glycerol 3-phosphate + CO2 + H2O. It participates in amino-acid biosynthesis; L-tryptophan biosynthesis; L-tryptophan from chorismate: step 4/5. The polypeptide is Indole-3-glycerol phosphate synthase (Pseudomonas fluorescens (strain SBW25)).